Consider the following 396-residue polypeptide: Phosphopentomutase (396 aa).

6 residues coordinate Mn(2+): D13, D288, H293, D329, H330, and H341.

This sequence belongs to the phosphopentomutase family. The cofactor is Mn(2+).

It is found in the cytoplasm. The enzyme catalyses 2-deoxy-alpha-D-ribose 1-phosphate = 2-deoxy-D-ribose 5-phosphate. It carries out the reaction alpha-D-ribose 1-phosphate = D-ribose 5-phosphate. It functions in the pathway carbohydrate degradation; 2-deoxy-D-ribose 1-phosphate degradation; D-glyceraldehyde 3-phosphate and acetaldehyde from 2-deoxy-alpha-D-ribose 1-phosphate: step 1/2. Isomerase that catalyzes the conversion of deoxy-ribose 1-phosphate (dRib-1-P) and ribose 1-phosphate (Rib-1-P) to deoxy-ribose 5-phosphate (dRib-5-P) and ribose 5-phosphate (Rib-5-P), respectively. The sequence is that of Phosphopentomutase from Clostridium perfringens (strain 13 / Type A).